A 371-amino-acid chain; its full sequence is Cytochrome b (371 aa).

8 consecutive transmembrane segments (helical) span residues 25–45 (FGSMLLACSSMQVLTGFFLAV), 69–90 (WMMQNLHAIGASMFFICIYIHI), 105–125 (WLSGTTLLIMLMVTAFFGXXX), 170–190 (XXXXXXXXXXXXXXXXXXXXX), 218–238 (YKDLLMLSLMVLMLLMTVSFL), 280–300 (LGGALALAMSIMILLTVPFTH), 312–332 (IMQLMFWTLVATFMVITWAAT), and 339–358 (FTMISQIASTIYFLFFIMNP). The heme b site is built by His-75 and His-89. The heme b site is built by Xaa-174 and Xaa-188.

Belongs to the cytochrome b family. The cytochrome bc1 complex contains 3 respiratory subunits (MT-CYB, CYC1 and UQCRFS1), 2 core proteins (UQCRC1 and UQCRC2) and probably 6 low-molecular weight proteins. The cofactor is heme b.

The protein localises to the mitochondrion inner membrane. In terms of biological role, component of the ubiquinol-cytochrome c reductase complex (complex III or cytochrome b-c1 complex) that is part of the mitochondrial respiratory chain. The b-c1 complex mediates electron transfer from ubiquinol to cytochrome c. Contributes to the generation of a proton gradient across the mitochondrial membrane that is then used for ATP synthesis. This chain is Cytochrome b (MT-CYB), found in Eryx tataricus (Tartar sand boa).